The chain runs to 1154 residues: uncharacterized protein (1154 aa).

The first 18 residues, 1 to 18 (MKRNIFIKLLISLLLLSS), serve as a signal peptide directing secretion. C19 carries N-palmitoyl cysteine lipidation. Residue C19 is the site of S-diacylglycerol cysteine attachment. A run of 4 helical transmembrane segments spans residues 288–308 (ISVS…FLIG), 394–414 (LGFI…FLIF), 423–443 (ALIT…FMLF), and 458–478 (ISYA…SMII).

This sequence belongs to the TrbL/VirB6 family.

The protein resides in the cell membrane. This is an uncharacterized protein from Rickettsia typhi (strain ATCC VR-144 / Wilmington).